Consider the following 385-residue polypeptide: MRIILLLFLIVFVVAQSSSSSSSSGCPCDSSYLCEPLQIAPRQEFLGFSLNSTQYPNYYWNQLTTLAIFYETIEDELLCIAHENDVRLVWGTTFPIENLGNSSYIEEWIQEQIEKVQSTFTDGLNFDVESPITDPTIAQQYTELVSATNKAFKAINPFYQISIDVAWSPSCIDKRCYDYAGLASNSDFLVAMDYDERSQVFGEKVCTAGANSSPSNALAGINNFTDLGISTDQLVMGLPWYGYIYKNCLNGDEAGLETVVCQIESVPFRGANCSDAAGSEYDYSYLVQLLQDQTINSSAVQWNTEWQSPYFNYIDPITGNVDQVWFDNPQSLSIKVQLAQKLNLRGVAVWNIDFLDFSDQYNSRPMWDALASFFPQSASSEQSLN.

A signal peptide spans 1-15 (MRIILLLFLIVFVVA). A GH18 domain is found at 16–377 (QSSSSSSSSG…DALASFFPQS (362 aa)). 2 N-linked (GlcNAc...) asparagine glycosylation sites follow: N51 and N101. The active-site Proton donor is E129. N-linked (GlcNAc...) asparagine glycosylation is found at N223, N272, and N296.

It belongs to the glycosyl hydrolase 18 family.

The protein resides in the lysosome. In terms of biological role, involved in the degradation of asparagine-linked glycoproteins. May hydrolyze of N-acetyl-beta-D-glucosamine (1-4)N-acetylglucosamine chitobiose core from the reducing end of the bond. The chain is Probable di-N-acetylchitobiase 2 (ctbs2) from Dictyostelium discoideum (Social amoeba).